Reading from the N-terminus, the 931-residue chain is GPI ethanolamine phosphate transferase 1 (931 aa).

A topological domain (cytoplasmic) is located at residue Met-1. The helical transmembrane segment at 2–24 threads the bilayer; that stretch reads LLFFTLGLLIHFVFFASIFDIYF. Over 25-442 the chain is Lumenal; sequence TSPLVHGMTP…SYYHTYDRFF (418 aa). N-linked (GlcNAc...) asparagine glycosylation is found at Asn-128, Asn-192, and Asn-350. The helical transmembrane segment at 443 to 463 threads the bilayer; it reads LGVNVVIGFVGWISYASLLII. Topologically, residues 464 to 482 are cytoplasmic; the sequence is KSHSNLIKGVSKEVKKPSH. The chain crosses the membrane as a helical span at residues 483–503; sequence LLPCSFVAIGILVAFFLLIQA. The Lumenal segment spans residues 504 to 508; sequence CPWTY. The helical transmembrane segment at 509–529 threads the bilayer; that stretch reads YVYGLLPLPIWYAVLREFQVI. Topologically, residues 530–543 are cytoplasmic; the sequence is QDLVVSVLTYPLSH. A helical membrane pass occupies residues 544–564; sequence FVGYLLAFTLGIEVLVLSFFY. Arg-565 is a topological domain (lumenal). The helical transmembrane segment at 566–586 threads the bilayer; that stretch reads YMLTAGLTAFAAWPFLTRLWT. Residues 587-591 are Cytoplasmic-facing; it reads RAKMT. Residues 592-612 traverse the membrane as a helical segment; that stretch reads SLSWTFFSLLLAVFPLMPVVG. The Lumenal portion of the chain corresponds to 613 to 618; that stretch reads RKPDIS. The chain crosses the membrane as a helical span at residues 619–639; it reads LVMGAGLLVLLLSLCVVTSLM. At 640–649 the chain is on the cytoplasmic side; it reads KRKDSFIKEE. A helical membrane pass occupies residues 650–670; sequence LLVHLLQVLSTVLSMYVVYST. Residues 671–685 lie on the Lumenal side of the membrane; that stretch reads QSSLLRKQGLPLMNQ. Residues 686–706 traverse the membrane as a helical segment; the sequence is IISWATLASSLVVPLLSSPVL. Topologically, residues 707 to 723 are cytoplasmic; the sequence is FQRLFSILLSLMSTYLL. Residues 724 to 744 traverse the membrane as a helical segment; that stretch reads LSTGYEALFPLVLSCLMFVWI. Topologically, residues 745–786 are lumenal; it reads NIEQETLQQSGVCCKQKLTSIQFSYNTDITQFRQLYLDDIRR. A helical transmembrane segment spans residues 787–807; the sequence is AFFLVFFLVTAFFGTGNIASI. At 808-824 the chain is on the cytoplasmic side; the sequence is NSFDLASVYCFLTVFSP. A helical transmembrane segment spans residues 825 to 845; the sequence is FMMGALMMWKILIPFVLVMCA. Residues 846-858 lie on the Lumenal side of the membrane; the sequence is FEAVQLTTQLSSK. A helical transmembrane segment spans residues 859–879; it reads SLFLIVLVISDIMALHFFFLV. Residues 880–894 lie on the Cytoplasmic side of the membrane; it reads KDYGSWLDIGTSISH. Residues 895 to 915 traverse the membrane as a helical segment; that stretch reads YVIVMSMTIFLVFLNGLAQLL. The Lumenal portion of the chain corresponds to 916–931; it reads TTKKLRLCGKPKSHFM.

Belongs to the PIGG/PIGN/PIGO family. PIGN subfamily.

The protein localises to the endoplasmic reticulum membrane. It participates in glycolipid biosynthesis; glycosylphosphatidylinositol-anchor biosynthesis. Ethanolamine phosphate transferase that catalyzes an ethanolamine phosphate (EtNP) transfer from phosphatidylethanolamine (PE) to the 2-OH position of the first alpha-1,4-linked mannose of the alpha-D-Man-(1-&gt;6)-alpha-D-Man-(1-&gt;4)-alpha-D-GlcN-(1-&gt;6)-(1-radyl,2-acyl-sn-glycero-3-phospho)-2-acyl-inositol (also termed H3) intermediate to generate an alpha-D-Man-(1-&gt;6)-2-PEtn-alpha-D-Man-(1-&gt;4)-alpha-D-GlcN-(1-&gt;6)-(1-radyl,2-acyl-sn-glycero-3-phospho)-2-acyl-inositol and participates in the eighth step of the glycosylphosphatidylinositol-anchor biosynthesis. May act as suppressor of replication stress and chromosome missegregation. The protein is GPI ethanolamine phosphate transferase 1 of Homo sapiens (Human).